The chain runs to 429 residues: L-threonine dehydratase biosynthetic IlvA (429 aa).

The residue at position 66 (Lys66) is an N6-(pyridoxal phosphate)lysine. Residues Asn93, 196-200 (GGGGC), and Ser322 contribute to the pyridoxal 5'-phosphate site. Positions 346–420 (HYFLVDFPQE…TDIHVEALEP (75 aa)) constitute an ACT-like domain.

It belongs to the serine/threonine dehydratase family. As to quaternary structure, homotetramer. Pyridoxal 5'-phosphate serves as cofactor.

It catalyses the reaction L-threonine = 2-oxobutanoate + NH4(+). It functions in the pathway amino-acid biosynthesis; L-isoleucine biosynthesis; 2-oxobutanoate from L-threonine: step 1/1. In terms of biological role, catalyzes the anaerobic formation of alpha-ketobutyrate and ammonia from threonine in a two-step reaction. The first step involved a dehydration of threonine and a production of enamine intermediates (aminocrotonate), which tautomerizes to its imine form (iminobutyrate). Both intermediates are unstable and short-lived. The second step is the nonenzymatic hydrolysis of the enamine/imine intermediates to form 2-ketobutyrate and free ammonia. In the low water environment of the cell, the second step is accelerated by RidA. This chain is L-threonine dehydratase biosynthetic IlvA (ilvA), found in Mycobacterium bovis (strain ATCC BAA-935 / AF2122/97).